Here is a 761-residue protein sequence, read N- to C-terminus: 3'-5' RNA nuclease TATDN2 (761 aa).

Disordered stretches follow at residues 1-90 (MASE…HFLG), 135-181 (CSLK…LRDQ), 197-294 (KSMP…RRTV), 318-337 (KDRE…SDVE), 343-364 (RFSQ…SSFT), and 388-486 (SSPK…PKSH). Composition is skewed to low complexity over residues 33-52 (APSS…PSSP) and 66-85 (SRRL…SSFS). The span at 247-294 (QKEKDATPEVSMEEDKTVPERSSFYDRRVVIDPQEKPSEEPLGDRRTV) shows a compositional bias: basic and acidic residues. Over residues 388–402 (SSPKPSSYPSTGSSS) the composition is skewed to low complexity. The segment covering 417 to 431 (SDYSPNSTGSVQNTS) has biased composition (polar residues). The span at 452–470 (RSSEEREVKEKRTFQEEMP) shows a compositional bias: basic and acidic residues. Histidine 499, histidine 501, glutamate 593, histidine 630, histidine 655, and aspartate 707 together coordinate a divalent metal cation.

The protein belongs to the metallo-dependent hydrolases superfamily. TatD-type hydrolase family. The cofactor is Mg(2+).

The protein resides in the nucleus. Functionally, mg(2+)-dependent 3'RNA exonuclease and endonuclease that resolves R-loops via specific degradation of R-loop RNA stucture. Shows no activity against D-loop and minimal activity against the RNA strand of an RNA-DNA hybrid duplex oligomer. Has no 3' or 5' exonuclease activity, no uracil glycosylase activity, and no 5' flap endonuclease activity on DNA substrates. May have a role in maintaining genomic stability through its role in R-loop resolution. The protein is 3'-5' RNA nuclease TATDN2 (TATDN2) of Homo sapiens (Human).